Consider the following 129-residue polypeptide: UPF0102 protein CPS_4433 (129 aa).

Belongs to the UPF0102 family.

The sequence is that of UPF0102 protein CPS_4433 from Colwellia psychrerythraea (strain 34H / ATCC BAA-681) (Vibrio psychroerythus).